Reading from the N-terminus, the 81-residue chain is RNA-binding protein Hfq (81 aa).

The Sm domain occupies 11-71 (DIFLNNARKN…ISTITPTKPI (61 aa)).

The protein belongs to the Hfq family. Homohexamer.

Functionally, RNA chaperone that binds small regulatory RNA (sRNAs) and mRNAs to facilitate mRNA translational regulation in response to envelope stress, environmental stress and changes in metabolite concentrations. Also binds with high specificity to tRNAs. The protein is RNA-binding protein Hfq of Clostridium beijerinckii (strain ATCC 51743 / NCIMB 8052) (Clostridium acetobutylicum).